Consider the following 120-residue polypeptide: Anti-adapter protein IraM (120 aa).

This sequence belongs to the IraM/RssC family.

It is found in the cytoplasm. Its function is as follows. Involved in the stabilization of the sigma stress factor RpoS. The chain is Anti-adapter protein IraM from Salmonella choleraesuis (strain SC-B67).